The following is a 141-amino-acid chain: Large ribosomal subunit protein uL11 (141 aa).

This sequence belongs to the universal ribosomal protein uL11 family. Part of the ribosomal stalk of the 50S ribosomal subunit. Interacts with L10 and the large rRNA to form the base of the stalk. L10 forms an elongated spine to which L12 dimers bind in a sequential fashion forming a multimeric L10(L12)X complex. One or more lysine residues are methylated.

In terms of biological role, forms part of the ribosomal stalk which helps the ribosome interact with GTP-bound translation factors. In Chloroflexus aggregans (strain MD-66 / DSM 9485), this protein is Large ribosomal subunit protein uL11.